The sequence spans 487 residues: Proline--tRNA ligase (487 aa).

Belongs to the class-II aminoacyl-tRNA synthetase family. ProS type 3 subfamily. Homodimer.

It is found in the cytoplasm. It carries out the reaction tRNA(Pro) + L-proline + ATP = L-prolyl-tRNA(Pro) + AMP + diphosphate. Functionally, catalyzes the attachment of proline to tRNA(Pro) in a two-step reaction: proline is first activated by ATP to form Pro-AMP and then transferred to the acceptor end of tRNA(Pro). The chain is Proline--tRNA ligase from Pyrobaculum calidifontis (strain DSM 21063 / JCM 11548 / VA1).